The primary structure comprises 558 residues: Type I restriction enzyme MjaIX methylase subunit (558 aa).

The disordered stretch occupies residues 1-37; that stretch reads MATLDKFLSIKENDEKTKKKESKKKSSKSNKTSESLV. The span at 8–18 shows a compositional bias: basic and acidic residues; sequence LSIKENDEKTK. A compositionally biased stretch (basic residues) spans 19–28; the sequence is KKESKKKSSK. Residues 227–232, 256–258, and aspartate 283 contribute to the S-adenosyl-L-methionine site; these read KFYTPR and SGG.

This sequence belongs to the N(4)/N(6)-methyltransferase family. The type I restriction/modification system is composed of three polypeptides R, M and S.

The enzyme catalyses a 2'-deoxyadenosine in DNA + S-adenosyl-L-methionine = an N(6)-methyl-2'-deoxyadenosine in DNA + S-adenosyl-L-homocysteine + H(+). Its function is as follows. The subtype gamma methyltransferase (M) subunit of a type I restriction enzyme. The M and S subunits together form a methyltransferase (MTase) that methylates A-3 on the top and A-2 on the bottom strand of the sequence 5'-CCAN(5)GTR-3'. In the presence of the R subunit the complex can also act as an endonuclease, binding to the same target sequence but cutting the DNA some distance from this site. Whether the DNA is cut or modified depends on the methylation state of the target sequence. When the target site is unmodified, the DNA is cut. When the target site is hemimethylated, the complex acts as a maintenance MTase modifying the DNA so that both strands become methylated. After locating a non-methylated recognition site, the enzyme complex serves as a molecular motor that translocates DNA in an ATP-dependent manner until a collision occurs that triggers cleavage. This is Type I restriction enzyme MjaIX methylase subunit from Methanocaldococcus jannaschii (strain ATCC 43067 / DSM 2661 / JAL-1 / JCM 10045 / NBRC 100440) (Methanococcus jannaschii).